We begin with the raw amino-acid sequence, 405 residues long: Serpin H1 (405 aa).

An N-terminal signal peptide occupies residues 1-15 (MQIFLVLALCGLAAA). 2 N-linked (GlcNAc...) asparagine glycosylation sites follow: Asn-107 and Asn-112. A Prevents secretion from ER motif is present at residues 402 to 405 (RDEL).

It belongs to the serpin family.

The protein resides in the endoplasmic reticulum lumen. Its function is as follows. Binds specifically to collagen. Could be involved as a chaperone in the biosynthetic pathway of collagen. This Gallus gallus (Chicken) protein is Serpin H1 (SERPINH1).